Here is a 5073-residue protein sequence, read N- to C-terminus: MSRFSCIFPTLTDGYIPKPDHTCAAGRRTYTIDLSGWKAPGSETESHILAAWGLVLSSYVGTDEVAFYVVPTTGPDTTALADLKVEGDMSRQSLTYAAMQLLHPALVGAGQVSGETANTIITFAKDIESLFVTQTEAANVGTAMAQALAEVGTCDNDRIIKDLNLMSPAHLEHIWRFNANVPGIWEECFHDVIERHATNRPHSLAVDAWDTKLTYADLVREARLLAAYLQQRGVGPGSVVPISFERSGAALVAMLAVSKAGSAFVSVPPNLPAGRLDAILDVIEAPFVVTWTKYESFWAERLPTLPIDNYPKPAADATVEALGKPEDLFYVIFTSGSTGRPKGCMLSHSNWLNGALRNAPSWKYGPESRVLQMLSHTFDMSLLEICTSLGSGACVCVPRTEEIETSISDAINRWQVNHVIMTPSLARALRPDDVPGLKTMCLGGEAFPKEIVTMWSERINLWQFYGPSECSINSSSRPITRPDADPLNIGPPNSAACWVTDVHDYNKLVPVGAIGELLVSGPIVGMGYLKNPVKTAEAFLEEVGFVAKDDPQFGGFRFYRTGDLVRWNSDGTITFCGRADTQVKLNGQRLELAEVEYQLGLESGVQYAIAMAPQAGLCKNNLIAILTVKGTSTGNQDTAADEIPLLDRRDPIVQETVKRLRSQLQHALPRYMVPTIWAFVGRMPMSASGKIDRVQLRDWVQKMSQETFDAITGRSLEAEDHVLGLSRLEQEVQLAWAEALGLSAAEVGLQQPFVALGGDSIMALDAVARCRARQIKISMVHILSCEGVREAASLAEVQETPAQQVAEMAVDYSNLWTRLSDDYDLDKLGVTQLEEVEDVFPCTTMQEGMFLGQIRRPGAYHMRFFHRVQLKGGCLPTVERIQQAWASLVERHPSLRTVFVDDLSPEAIYHSIVLRSVPMELRMREVPRDLRAEAALAMFTEELVPFRANAPLHRMLLLTCRGRVPYFMLEISHVIMDGYALSVFRREFIRACSSSAPLPRGPDYRMFANYHRTRQTDDSARYWTNYLADCVPCHIPTHAVSAPSDGPPEWPRTLQRRDFGFDNSAAFLQRCKERQVTLACAIRAAWALVLRAYTQSQDVCFGYVSSGRNVPVPEVETIFGLCLSMQVCRARLSEASTIASIAKKIQEDYVASLPFQHYPLAEAQRGLKQTHGQGLFNTAISMEWVPPSAEDEDALLDLEEIREQDDPTEYDIAISVDVHEGHIKLGFLYWPNLTDFEITHLAEALQGAMNCFVFQPDEALNTLSLLQASDVCSALADGPTLLPLEAVRGNVVSMIDRWVTRHPEGAAIDGWDGSLTYKELHEQSSWVARNLLHQGVQLGDRILVCADRSSRTVATVLGIVRAGCVLVLSNPTDPAKRLQWLAKRCNAALIVADPTYEERFATADARVLSTTSVCAPAAWDYEFPALDEHDLISILFTSGSTGTPKGILMEHGALATSVLLGHGRTLRFSRHTRMLHFASLTFDAALAEIFTTLAHGGCICVPCEEDRLSDVPGCISRFAVNMAMLTPSVGRLLEPGALPTLKSLIMVGEPMSRLDVERFAPVLDLYNGAGPTETSIMVTIAGPMKPTDEPVDLGYAVAGVRLWVTEAENPNRLAPLGAVGELVVEGRLVTRGYLDDPARTHEAFLPSLPWLPSQHALYRTGDLVRYADDGSLRYMGRKDTQVKLRGQRIELQEVEYHLRKSLQQAQIVVEMVVPAGKMRAQASLVAFVSGLTAADVESSSACNLEGMIPISQIVLPKSAFKALEEALPRHMIPSVYYALDTIPLSVNGKADRRRLREMGSLLLASSAAHKNTIEGMSKSVKWTPASELERTLLELMAATLGLEAETMHGDDSFFELGGDSVSAMKLVATARDKYKLSLSVPQMFRYPTICQLAAEVGEPAGQSASSASSTTEEGFTFSTPDDSSTNDGVDDDFLQLATAQLAQLAQEKGKKVDIAALLKQLQGGSSSNKTPSVSSSSSSSSSSKRKKKAALAEAAAPISVQFSLLDGGADVLDKVRAQAVEHCKIPHEDIEDIYPATALQEGMIALTARTPGVYTTTLTCDLSEQVDLARLHYAWGKAAEAHPILRTRIILTDNNTAVQVVQRAKGLPWDTYSLREGDVLPDLTSNMTSGSPLLRLAVVHRQNQPRMLLVAIHHALYDGWSMPLLKEAVEDAYHGRDLRPQPFTPFIKHLIAGKVAAQAFWTTHLDSFAGGVFPNLPGVDHQVQPKERRTRSLTMPTATPRAQYTMATKIQAAWAVTVSRYAEDNDVVFGSVSTGRSAPVPAIDRMVGPTITTVPVRISLGDQAERLTSLLQRVQDDSWERMDHEHLGLQHIRRLGESAAAACGFQTLLVIQPREQPNNKYRSTLLSSLQDVAELEGVDTYPLMLVCEPDGARLHLSAVFDPVVLDGVTLERMLANWELVLTQLWNEPDMAVLELDAVSCSDTETLIRWNTGETIADGCAHDAVCEWSSRTPHAPAVCAWDGEWTYEELERCSSLVASQILAHDVSSGDFIALYHEKSRWAAAGILAVFKAGAILITLDPAHPTDRIKNILDQARPRLILTSQSLLDVARNLETPALSVQFAASQPLPEGWSSLPTISSTQAAYAPFTSGSTGRPKGIPLDHRGLAASTASIAHSCLLRPASRVLHFASFAFDASMMEHLIAWRAGGCLCIPDETARQTDLAKCIRDFNVTWAFLTPSCLRLITPDDVPSLQALGLGGESMTSEDIAIWSPRLRQIVQLYGPAECCIVAALTEVTKPSENRLIGRPNACRCWVVDLQNPDRLAPIGAVGELLIEGITVGRGYINDPDRTTPVFIRPPKWLQTLYPDDQEPKRLYRTGDLVRYADVDGKLAFIGRRDGQLKLHGQRIELADIEAHLRPLIPATQKMAVEMLHSADNQNLILAAFLEEMSTSQKPTEREVKLLHPSQSQCALNVMAIDSALSRKVPQYMIPSMYLHISRLPLSASGKLDRRHLREMIAELPRQRLNEYAAGSGLRVPDRPKTSQEQEMQAIWARVLSLDPNTIGVNDDFFRIGGDSISGMQVATKCNAAGIHITSADLFRHRTIEQLICHLNSIRTTDCASVSLPAEPVDEWVALAPIQQLFFEVAPEGPNHFNQSLLLRTSRRVSVEELAGGLDILVGRHSMLRARFCRKDSGQWFQQVKSLGSEPASNFYRLAAHNQITRESLPTLFTTAQMALSIQDGPLLTVDLVELEDGRQLVYLAAHHLIIDLVSWRILHGELEEYLQTDSLSSATGSVPFITWSQLQAEYSAEHLTPARAFPGFQEANDDFDVMRYWGISSESNTFGQTSISRFTLDRTVTDILFGSANKVMDTRPVEILQAALWYSCNQALTDRPGPSIYVEGHGREPWTDAINVSGTVGWFTTMSPLVSTPWDHLSRTSMRDFVDALSYIKDQRRRIPANGWAYFTSRYLNDEGRVAYGRTKPVVEVLFNYMGQYQEMNREGAMLQLAGNDIQSGTGASDIADNVPRFSLIDVSAFTANGCLTFEFTFPQLMQQDARLEQCIKECERTLVAAASSLSAEGPRKTLTDFPLMSALTYDQLSQFLDHTLPSLGLRAQDVLDIYPCSPVQQGMLLAQLRDRQAYQQRFRFQVMSRVPTDQLPLEKVKGAWTEVINRHDILRTLLLPVSDHSHFDQVVMVPGSLQHLVRLNAMDTNPADGLPHTINITSDSADTIICEWKVSHALVDAMSIAVIQREVNQAFEGSLGQYRDVPQYVDYIKWLSLQDNTEAQAYWQNHLKEVEPCLFPQLTSSPNPINPEGTISAIRATWTRDARMDDLCHKHAITLTNLFQIVWAVVLGAYVGTDEVCFGYTTLGRDVPVDGVETMVGPLVNVLAATVQLKQDESILNALLTHQNRLTSSLQHQHYALADVYACLGLAGSQLFNTIVSLQDISHFDVPDERGTRLEMLPANDVSEYNVALNIGVDKSSIQLVCSYQTVSLSAEQADALLRTVFHVLGEILRDPTQRFCELEVISPKCKEQLVKWNAGMLAPTDEYIHEKIQGQCRIHASRQAVCAWDGMFTYAEVDDLSSRLAARLIRMGVTSEDIIPIYSPKSRWTVIAILGVLKAGAAFTLLETSHPMARLHMICNQIKAPMIIAPASHAVPAANLAPILVVLDNITSLAQEKLDPFPGIGIPPAGEALAYLIFTSGSTGNPKGVMVTHQNLCSNASIITTSVNMTSDSRVLQFASHAFDGCLWEILGALLAGACLIIPSESENKEDLTGCIERMDVTWAFLTPSVARILKPETLPSLCNLVLGGEPIAASDLDMWRGHVQVVCAYGPTETTILASTTSPSTFPTDGKDIGTPTGSSLWIVDTRNYQTMVPLGATGELLIEGPNVSQGYLGDPEKTNDAFPDAPRWLSQLRKSPTRVYRTGDLVRFDTTAGTIRFVGRKDNQIKFHGQRIELGEIEHHAQLAFSSASTVIVDLITPEQPQQPYIVAFVHLPDATPETTETMDTILLPPSESFRADALAAQKKMHKRLPHYMVPAAFLPLHRFPLSATGKADRKRLRQCALGLSSPDLSAYRATASTKRMPSTAAERKMQLLVASVLGRDPTEIGMDDSFFYLGGDSVQAMRLVAEGRQQGLSLSLRAIFDSPRLRDLGDQARSPNADNQRVSTASSAGLRDNRDQIDKVVATNSLKKADVADVLPTTSFQRHWLDAQLKSYIVVDIPGPIDPARLLRAMHRVVEAHPILRVSFVPYETTTLQIILRTAAAMTNVDVSTTTVDFSTTTVEDICRQDAGAQLPPGVPYLRVILATQDKADHKLIMRLSHAQYDAVSLSLLMNDLSHAYATETHALPSSHFPRFNDYITYQQAQRADPTATTFWRLLLQNVSLTYLNLQPAESSASNGTPITLSRDINIATFPSLPNGITIATMVKAAWSLVLAQKTDSHAVIFGQVVHGRTIALPGVEGIVGPCANITPVVARLGLQTTGFELMQTLQDQHRSAMPYEALDLDDALAYTKNSPVGRRGLQTIVQHQNNVMVDDMELLLGEVKCGVDVRAVDHVPKEVWVYSSVDEKRPDMLEVKIMSSTLALGEEVAEELMGLLVEKIVGLLRHPERVCV.

Residues 194 to 585 (ERHATNRPHS…CGRADTQVKL (392 aa)) form an adenylation 1 region. In terms of domain architecture, Carrier 1 spans 726-799 (SRLEQEVQLA…EAASLAEVQE (74 aa)). Position 760 is an O-(pantetheine 4'-phosphoryl)serine (Ser760). Residues 837–1268 (EDVFPCTTMQ…ALNTLSLLQA (432 aa)) are condensation 1. The interval 1296–1685 (DRWVTRHPEG…GRKDTQVKLR (390 aa)) is adenylation 2. In terms of domain architecture, Carrier 2 spans 1823–1900 (TPASELERTL…QLAAEVGEPA (78 aa)). At Ser1860 the chain carries O-(pantetheine 4'-phosphoryl)serine. 2 disordered regions span residues 1901-1930 (GQSA…DGVD) and 1963-1984 (GGSS…SSSK). 2 stretches are compositionally biased toward low complexity: residues 1903–1927 (SASS…STND) and 1965–1982 (SSSN…SSSS). Residues 2031–2446 (EDIYPATALQ…AVSCSDTETL (416 aa)) are condensation 2. The adenylation 3 stretch occupies residues 2469-2861 (SRTPHAPAVC…IGRRDGQLKL (393 aa)). Residues 2997-3073 (RPKTSQEQEM…QLICHLNSIR (77 aa)) form the Carrier 3 domain. Position 3034 is an O-(pantetheine 4'-phosphoryl)serine (Ser3034). 2 condensation regions span residues 3090-3555 (WVAL…TYDQ) and 3576-3995 (DIYP…EQLV). The tract at residues 4020 to 4410 (HASRQAVCAW…VGRKDNQIKF (391 aa)) is adenylation 4. Residues 4544-4620 (MPSTAAERKM…DLGDQARSPN (77 aa)) enclose the Carrier 4 domain. Ser4581 bears the O-(pantetheine 4'-phosphoryl)serine mark. The interval 4611–4633 (DLGDQARSPNADNQRVSTASSAG) is disordered. Residues 4617 to 4631 (RSPNADNQRVSTASS) are compositionally biased toward polar residues. A condensation 5 region spans residues 4657 to 4991 (DVLPTTSFQR…LQTIVQHQNN (335 aa)).

The protein belongs to the NRP synthetase family.

Its pathway is secondary metabolite biosynthesis. In terms of biological role, nonribosomal peptide synthetase; part of the gene cluster that mediates the biosynthesis of malformins, cyclic pentapeptides with a disulfide bond between 2 consecutive cysteins, that show potential anti-tumor as well as antimalarial and antitrypanosomal properties. The nonribosomal peptide synthetase mlfA is responsible of the formation of the cyclic pentapeptide. The malformin biosynthesis clusters in malformin-producing fungi also contain enzymes involved in the formation of the disulfide bond between the two consecutive cysteins within malformins, in addition to additional tailoring enzymes such as methyltransferases or oxidoreductases. They are also composed of up to 4 major facilitator superfamily transporters, and transcription factors probably involved in the regulation of the expression of those clusters. The sequence is that of Malformin synthetase mlfA from Aspergillus tubingensis (strain CBS 134.48).